The primary structure comprises 530 residues: Alpha-(1,3)-fucosyltransferase 4 (530 aa).

Disordered stretches follow at residues M1–P48 and H66–D113. At M1 to R147 the chain is on the cytoplasmic side. The span at A88–C106 shows a compositional bias: basic and acidic residues. Residues G148–W172 traverse the membrane as a helical; Signal-anchor for type II membrane protein segment. Residues G173–R530 are Lumenal-facing. N216 and N315 each carry an N-linked (GlcNAc...) asparagine glycan.

The protein belongs to the glycosyltransferase 10 family.

It localises to the golgi apparatus. The protein resides in the golgi stack membrane. It catalyses the reaction a beta-D-galactosyl-(1-&gt;4)-N-acetyl-beta-D-glucosaminyl derivative + GDP-beta-L-fucose = a beta-D-galactosyl-(1-&gt;4)-[alpha-L-fucosyl-(1-&gt;3)]-N-acetyl-beta-D-glucosaminyl derivative + GDP + H(+). The catalysed reaction is an N-acetyl-alpha-neuraminyl-(2-&gt;3)-beta-D-galactosyl-(1-&gt;4)-N-acetyl-beta-D-glucosaminyl derivative + GDP-beta-L-fucose = an alpha-Neu5Ac-(2-&gt;3)-beta-D-Gal-(1-&gt;4)-[alpha-L-Fuc-(1-&gt;3)]-beta-D-GlcNAc derivative + GDP + H(+). The enzyme catalyses an alpha-Neu5Ac-(2-&gt;3)-beta-D-Gal-(1-&gt;4)-beta-D-GlcNAc-(1-&gt;3)-beta-D-Gal-(1-&gt;4)-beta-D-GlcNAc derivative + GDP-beta-L-fucose = an alpha-Neu5Ac-(2-&gt;3)-beta-D-Gal-(1-&gt;4)-beta-D-GlcNAc-(1-&gt;3)-beta-D-Gal-(1-&gt;4)-[alpha-L-Fuc-(1-&gt;3)]-beta-D-GlcNAc derivative + GDP + H(+). It carries out the reaction an alpha-Neu5Ac-(2-&gt;3)-beta-D-Gal-(1-&gt;4)-beta-D-GlcNAc6S derivative + GDP-beta-L-fucose = an alpha-Neu5Ac-(2-&gt;3)-beta-D-Gal-(1-&gt;4)-[alpha-L-Fuc-(1-&gt;3)]-beta-D-GlcNAc6S derivative + GDP + H(+). It participates in protein modification; protein glycosylation. Its function is as follows. Catalyzes alpha(1-&gt;3) linkage of fucosyl moiety transferred from GDP-beta-L-fucose to N-acetyl glucosamine (GlcNAc) within type 2 lactosamine (LacNAc, Gal-beta(1-&gt;4)GlcNAc) glycan attached to N- or O-linked glycoproteins. Robustly fucosylates nonsialylated distal LacNAc unit of the polylactosamine chain to form Lewis X antigen (CD15), a glycan determinant known to mediate important cellular functions in development and immunity. Fucosylates with lower efficiency sialylated LacNAc acceptors to form sialyl Lewis X and 6-sulfo sialyl Lewis X determinants that serve as recognition epitopes for C-type lectins. Together with FUT7 contributes to SELE, SELL and SELP selectin ligand biosynthesis and selectin-dependent lymphocyte homing, leukocyte migration and blood leukocyte homeostasis. In a cell type specific manner, may also fucosylate the internal LacNAc unit of the polylactosamine chain to form VIM-2 antigen that serves as recognition epitope for SELE. The sequence is that of Alpha-(1,3)-fucosyltransferase 4 (FUT4) from Pan troglodytes (Chimpanzee).